The sequence spans 160 residues: 3-hydroxyacyl-[acyl-carrier-protein] dehydratase FabZ (160 aa).

Histidine 58 is an active-site residue.

This sequence belongs to the thioester dehydratase family. FabZ subfamily.

It is found in the cytoplasm. The enzyme catalyses a (3R)-hydroxyacyl-[ACP] = a (2E)-enoyl-[ACP] + H2O. In terms of biological role, involved in unsaturated fatty acids biosynthesis. Catalyzes the dehydration of short chain beta-hydroxyacyl-ACPs and long chain saturated and unsaturated beta-hydroxyacyl-ACPs. The chain is 3-hydroxyacyl-[acyl-carrier-protein] dehydratase FabZ from Ruegeria sp. (strain TM1040) (Silicibacter sp.).